A 174-amino-acid polypeptide reads, in one-letter code: Large ribosomal subunit protein uL18 (174 aa).

Belongs to the universal ribosomal protein uL18 family. Part of the 50S ribosomal subunit. Contacts the 5S and 23S rRNAs.

Its function is as follows. This is one of the proteins that bind and probably mediate the attachment of the 5S RNA into the large ribosomal subunit, where it forms part of the central protuberance. This is Large ribosomal subunit protein uL18 from Methanosarcina mazei (strain ATCC BAA-159 / DSM 3647 / Goe1 / Go1 / JCM 11833 / OCM 88) (Methanosarcina frisia).